Reading from the N-terminus, the 162-residue chain is Phospholipase A and acyltransferase 3 (162 aa).

Over 1–133 (MLAPIPEPKP…VPRSDQVRDA (133 aa)) the chain is Cytoplasmic. Positions 13–129 (LIEIFRPMYR…LRYGVPRSDQ (117 aa)) constitute an LRAT domain. Catalysis depends on residues His23 and His35. Residue Cys113 is the Acyl-thioester intermediate of the active site. A helical transmembrane segment spans residues 134 to 154 (VKAVGIAGVGLAALGLVGVML). The Lumenal segment spans residues 155 to 162 (SRNKKQKQ).

This sequence belongs to the H-rev107 family. In terms of assembly, interacts with PPP2R1A; this interaction might decrease PP2A activity. In terms of tissue distribution, ubiquitously expressed in normal tissues but down-regulated in primary carcinomas or in many cell lines derived from tumors. Highly expressed in white adipose tissue and in adipocytes. Expressed at lower levels in brown adipose tissue.

It localises to the cell membrane. The protein resides in the cytoplasm. The protein localises to the cytosol. It is found in the perinuclear region. Its subcellular location is the peroxisome membrane. It localises to the mitochondrion membrane. The protein resides in the nucleus envelope. The protein localises to the lysosome membrane. It is found in the endoplasmic reticulum membrane. The enzyme catalyses a 1,2-diacyl-sn-glycero-3-phosphocholine + H2O = a 1-acyl-sn-glycero-3-phosphocholine + a fatty acid + H(+). It catalyses the reaction a 1,2-diacyl-sn-glycero-3-phosphocholine + H2O = a 2-acyl-sn-glycero-3-phosphocholine + a fatty acid + H(+). The catalysed reaction is 1,2-dihexadecanoyl-sn-glycero-3-phosphocholine + H2O = 1-hexadecanoyl-sn-glycero-3-phosphocholine + hexadecanoate + H(+). It carries out the reaction 1,2-dihexadecanoyl-sn-glycero-3-phosphocholine + H2O = 2-hexadecanoyl-sn-glycero-3-phosphocholine + hexadecanoate + H(+). The enzyme catalyses 1-hexadecanoyl-2-(9Z-octadecenoyl)-sn-glycero-3-phosphocholine + H2O = 2-(9Z-octadecenoyl)-sn-glycero-3-phosphocholine + hexadecanoate + H(+). It catalyses the reaction 1-hexadecanoyl-2-(9Z-octadecenoyl)-sn-glycero-3-phosphocholine + H2O = 1-hexadecanoyl-sn-glycero-3-phosphocholine + (9Z)-octadecenoate + H(+). The catalysed reaction is 1-hexadecanoyl-2-(5Z,8Z,11Z,14Z-eicosatetraenoyl)-sn-glycero-3-phosphocholine + H2O = 1-hexadecanoyl-sn-glycero-3-phosphocholine + (5Z,8Z,11Z,14Z)-eicosatetraenoate + H(+). It carries out the reaction 1-hexadecanoyl-2-(5Z,8Z,11Z,14Z-eicosatetraenoyl)-sn-glycero-3-phosphocholine + H2O = 2-(5Z,8Z,11Z,14Z)-eicosatetraenoyl-sn-glycero-3-phosphocholine + hexadecanoate + H(+). The enzyme catalyses 1-hexadecanoyl-2-(9Z,12Z-octadecadienoyl)-sn-glycero-3-phosphoethanolamine + H2O = 1-hexadecanoyl-sn-glycero-3-phosphoethanolamine + (9Z,12Z)-octadecadienoate + H(+). It catalyses the reaction 1-hexadecanoyl-2-(9Z,12Z-octadecadienoyl)-sn-glycero-3-phosphoethanolamine + H2O = 2-(9Z,12Z)-octadecadienoyl-sn-glycero-3-phosphoethanolamine + hexadecanoate + H(+). The catalysed reaction is 1-hexadecanoyl-2-(5Z,8Z,11Z,14Z-eicosatetraenoyl)-sn-glycero-3-phosphoethanolamine + H2O = 1-hexadecanoyl-sn-glycero-3-phosphoethanolamine + (5Z,8Z,11Z,14Z)-eicosatetraenoate + H(+). It carries out the reaction 1-hexadecanoyl-2-(5Z,8Z,11Z,14Z-eicosatetraenoyl)-sn-glycero-3-phosphoethanolamine + H2O = 2-(5Z,8Z,11Z,14Z)-eicosatetraenoyl-sn-glycero-3-phosphoethanolamine + hexadecanoate + H(+). The enzyme catalyses 1-hexanoyl-2-acyl-sn-glycero-3-phosphocholine + H2O = hexanoate + a 2-acyl-sn-glycero-3-phosphocholine + H(+). It catalyses the reaction 1-hexanoyl-2-acyl-sn-glycero-3-phosphocholine + H2O = 1-hexanoyl-sn-glycero-3-phosphocholine + a fatty acid + H(+). The catalysed reaction is 1,2-diheptadecanoyl-sn-glycero-3-phosphoethanolamine + 1-(9Z-octadecenoyl)-2-hexadecanoyl-sn-glycero-3-phosphocholine = 1,2-diheptadecanoyl-sn-glycero-3-phospho-N-hexadecanoyl-ethanolamine + 1-(9Z-octadecenoyl)-sn-glycero-3-phosphocholine + H(+). It carries out the reaction 1,2-diheptadecanoyl-sn-glycero-3-phosphoethanolamine + 1-(9Z-octadecenoyl)-2-hexadecanoyl-sn-glycero-3-phosphocholine = 1,2-diheptadecanoyl-sn-glycero-3-phospho-N-(9Z-octadecenoyl)-ethanolamine + 2-hexadecanoyl-sn-glycero-3-phosphocholine + H(+). The enzyme catalyses 1,2-dihexanoyl-sn-glycero-3-phosphoethanolamine + 2-heptanoyl-sn-glycero-3-phosphocholine = hexanoyl-sn-glycero-3-phosphoethanolamine + 1-hexanoyl-2-heptanoyl-sn-glycero-3-phosphocholine. It catalyses the reaction 1-hexadecanoyl-2-octadecanoyl-sn-glycero-3-phosphocholine + H2O = octadecanoate + 1-hexadecanoyl-sn-glycero-3-phosphocholine + H(+). The catalysed reaction is 1-hexadecanoyl-2-octadecanoyl-sn-glycero-3-phosphocholine + H2O = 2-octadecanoyl-sn-glycero-3-phosphocholine + hexadecanoate + H(+). It carries out the reaction 1-octadecanoyl-2-hexadecanoyl-sn-glycero-3-phosphocholine + H2O = 1-octadecanoyl-sn-glycero-3-phosphocholine + hexadecanoate + H(+). The enzyme catalyses 1-octadecanoyl-2-hexadecanoyl-sn-glycero-3-phosphocholine + H2O = 2-hexadecanoyl-sn-glycero-3-phosphocholine + octadecanoate + H(+). It catalyses the reaction 1-hexadecanoyl-2-(9Z,12Z-octadecadienoyl)-sn-glycero-3-phosphocholine + H2O = (9Z,12Z)-octadecadienoate + 1-hexadecanoyl-sn-glycero-3-phosphocholine + H(+). The catalysed reaction is 1-hexadecanoyl-2-(9Z,12Z-octadecadienoyl)-sn-glycero-3-phosphocholine + H2O = 2-(9Z,12Z-octadecadienoyl)-sn-glycero-3-phosphocholine + hexadecanoate + H(+). It carries out the reaction 1,2-di-(9Z-octadecenoyl)-sn-glycero-3-phosphocholine + H2O = 2-(9Z-octadecenoyl)-sn-glycero-3-phosphocholine + (9Z)-octadecenoate + H(+). The enzyme catalyses 1,2-dihexadecanoyl-sn-glycero-3-phosphocholine + H2O = hexadecanoyl-sn-glycero-3-phosphocholine + hexadecanoate + H(+). It catalyses the reaction 1,2-di-(9Z-octadecenoyl)-sn-glycero-3-phosphocholine + H2O = 1-(9Z-octadecenoyl)-sn-glycero-3-phosphocholine + (9Z)-octadecenoate + H(+). The catalysed reaction is 1,2-di-(9Z-octadecenoyl)-sn-glycero-3-phosphoethanolamine + 1,2-dihexadecanoyl-sn-glycero-3-phosphocholine = hexadecanoyl-sn-glycero-3-phosphocholine + N-hexadecanoyl-1,2-di-(9Z-octadecenoyl)-sn-glycero-3-phosphoethanolamine + H(+). It carries out the reaction 1,2-di-(9Z,12Z-octadecadienoyl)-sn-glycero-3-phosphocholine + H2O = 1-(9Z,12Z)-octadecadienoyl-sn-glycero-3-phosphocholine + (9Z,12Z)-octadecadienoate + H(+). Its function is as follows. Exhibits both phospholipase A1/2 and acyltransferase activities. Shows phospholipase A1 (PLA1) and A2 (PLA2), catalyzing the calcium-independent release of fatty acids from the sn-1 or sn-2 position of glycerophospholipids. For most substrates, PLA1 activity is much higher than PLA2 activity. Shows O-acyltransferase activity, catalyzing the transfer of a fatty acyl group from glycerophospholipid to the hydroxyl group of lysophospholipid. Shows N-acyltransferase activity,catalyzing the calcium-independent transfer of a fatty acyl group at the sn-1 position of phosphatidylcholine (PC) and other glycerophospholipids to the primary amine of phosphatidylethanolamine (PE), forming N-acylphosphatidylethanolamine (NAPE), which serves as precursor for N-acylethanolamines (NAEs). Exhibits high N-acyltransferase activity and low phospholipase A1/2 activity. Required for complete organelle rupture and degradation that occur during eye lens terminal differentiation, when fiber cells that compose the lens degrade all membrane-bound organelles in order to provide lens with transparency to allow the passage of light. Organelle membrane degradation is probably catalyzed by the phospholipase activity. Functionally, (Microbial infection) Acts as a host factor for picornaviruses: required during early infection to promote viral genome release into the cytoplasm. The sequence is that of Phospholipase A and acyltransferase 3 from Mus musculus (Mouse).